Consider the following 372-residue polypeptide: 4-hydroxy-3-methylbut-2-en-1-yl diphosphate synthase (flavodoxin) (372 aa).

Residues C270, C273, C305, and E312 each contribute to the [4Fe-4S] cluster site.

It belongs to the IspG family. The cofactor is [4Fe-4S] cluster.

The enzyme catalyses (2E)-4-hydroxy-3-methylbut-2-enyl diphosphate + oxidized [flavodoxin] + H2O + 2 H(+) = 2-C-methyl-D-erythritol 2,4-cyclic diphosphate + reduced [flavodoxin]. It functions in the pathway isoprenoid biosynthesis; isopentenyl diphosphate biosynthesis via DXP pathway; isopentenyl diphosphate from 1-deoxy-D-xylulose 5-phosphate: step 5/6. Functionally, converts 2C-methyl-D-erythritol 2,4-cyclodiphosphate (ME-2,4cPP) into 1-hydroxy-2-methyl-2-(E)-butenyl 4-diphosphate. This Cronobacter sakazakii (strain ATCC BAA-894) (Enterobacter sakazakii) protein is 4-hydroxy-3-methylbut-2-en-1-yl diphosphate synthase (flavodoxin).